The sequence spans 181 residues: Early E3 20.3 kDa glycoprotein (181 aa).

N-linked (GlcNAc...) asparagine; by host glycosylation is found at N29, N57, N70, and N75.

Belongs to the adenoviridae E3_20 family.

Its function is as follows. E3 proteins seem to be dispensable for virus growth in tissue culture cells. They are potentially important for virus growth under special conditions; E3 region may help adenoviruses to evade the immune surveillance of the host. This is Early E3 20.3 kDa glycoprotein from Homo sapiens (Human).